A 484-amino-acid polypeptide reads, in one-letter code: Trigger factor (484 aa).

Positions 165–244 constitute a PPIase FKBP-type domain; the sequence is GDFVQIDLTA…VQSVKERELP (80 aa). Residues 429 to 484 form a disordered region; sequence DAVSEEPADADAEAVVADAPAEEAAEAPAAEEAPAEKPKKKAPAKKKASEKAADSE. Residues 430 to 440 show a composition bias toward acidic residues; sequence AVSEEPADADA. Over residues 475 to 484 the composition is skewed to basic and acidic residues; the sequence is KASEKAADSE.

It belongs to the FKBP-type PPIase family. Tig subfamily.

The protein resides in the cytoplasm. It carries out the reaction [protein]-peptidylproline (omega=180) = [protein]-peptidylproline (omega=0). Its function is as follows. Involved in protein export. Acts as a chaperone by maintaining the newly synthesized protein in an open conformation. Functions as a peptidyl-prolyl cis-trans isomerase. This chain is Trigger factor, found in Clavibacter michiganensis subsp. michiganensis (strain NCPPB 382).